The chain runs to 328 residues: 2-oxoglutarate-dependent dioxygenase gloE (328 aa).

In terms of domain architecture, Fe2OG dioxygenase spans 170-271; sequence TRTNLTFLKY…RYTLAYFLRP (102 aa). Histidine 194, aspartate 196, and histidine 249 together coordinate Fe cation. Position 262 (arginine 262) interacts with 2-oxoglutarate.

The protein belongs to the iron/ascorbate-dependent oxidoreductase family. Fe(2+) serves as cofactor.

The protein operates within mycotoxin biosynthesis. 2-oxoglutarate-dependent dioxygenase; part of the gene cluster that mediates the biosynthesis of pneumocandins, lipohexapeptides of the echinocandin family that prevent fungal cell wall formation by non-competitive inhibition of beta-1,3-glucan synthase. The 10,12-dimethylmyristoyl side chain is synthesized by the reducing polyketide synthase gloL/GLPKS4. The thioesterase gloN/GLHYD exclusively interacts with gloL/GLPKS4 to maintain turnover of the polyketide side chain. The 10R,12S-dimethylmyristic acid is then transferred to the first thiolation domain of the nonribosomal peptide synthetase gloA/GLNRPS4 by the acyl-AMP ligase gloD/GLligase, followed by its acylation to L-ornithine to trigger elongation of the cyclic hexapeptide. L-ornithine, 4R-hydroxyl-L-proline (generated from L-proline by the dioxygenase gloF/GLOXY2), 3S-hydroxyl-L-homotyrosine (generated by gloG/GLHtyB, gloH/GLHtyA, gloI/GLHtyC, gloJ/GLHtyD and hydroxylated at C-3 by the dioxygenase gloM/GLOXY1), 3R-hydroxyl-L-glutamine (generated from L-glutamine probably by the dioxygenase gloE/GLOXY3) and 3S-hydroxyl-L-proline (generated from L-proline by the dioxygenase gloF/GLOXY2 to yield pneumocandin B0), or 3S-hydroxyl-4S-methyl-L-proline (generated from L-leucine by the dioxygenase gloC/GLOXY4 to yield pneumocandin A0) are sequentially added to the growing chain. The last C domain of gloA/GLNRPS4 is proposed to be responsible for cyclization by condensation to form the peptide bond between L-ornithine and 3S-hydroxyl-4S-methyl-L-proline (for pneumocandin A0) or 3S-hydroxyl-L-proline (for pneumocandin B0). Finally, the subsequent C-4 hydroxylation of 3S-hydroxyl-L-homotyrosine and L-ornithine dihydroxylation at C-4 and C-5 are performed by the cytochrome P450 monooxygenases gloP/GLP450-1 and gloO/GLP450-2, respectively. The chain is 2-oxoglutarate-dependent dioxygenase gloE from Glarea lozoyensis (strain ATCC 20868 / MF5171).